The following is a 328-amino-acid chain: Probable cytosolic iron-sulfur protein assembly protein 1 (328 aa).

WD repeat units lie at residues 12 to 49, 54 to 93, 102 to 141, 148 to 187, 192 to 233, 246 to 284, and 291 to 328; these read LHGD…LVEE, AHKK…YSGE, GHEN…EEFE, EHSQ…WECA, GHGG…ADVF, VHTR…RWEV, and AHTV…LREE.

It belongs to the WD repeat CIA1 family. Interacts with NAR1.

The protein resides in the cytoplasm. Its subcellular location is the nucleus. Essential component of the cytosolic iron-sulfur (Fe/S) protein assembly machinery. Required for the maturation of extramitochondrial Fe/S proteins. The protein is Probable cytosolic iron-sulfur protein assembly protein 1 of Eremothecium gossypii (strain ATCC 10895 / CBS 109.51 / FGSC 9923 / NRRL Y-1056) (Yeast).